A 654-amino-acid chain; its full sequence is tRNA uridine 5-carboxymethylaminomethyl modification enzyme MnmG (654 aa).

Residue 17–22 (GGGHAG) coordinates FAD. 289-303 (GPRYCPSIEDKIVKF) contacts NAD(+).

Belongs to the MnmG family. Homodimer. Heterotetramer of two MnmE and two MnmG subunits. FAD serves as cofactor.

The protein localises to the cytoplasm. Its function is as follows. NAD-binding protein involved in the addition of a carboxymethylaminomethyl (cmnm) group at the wobble position (U34) of certain tRNAs, forming tRNA-cmnm(5)s(2)U34. In Prochlorococcus marinus subsp. pastoris (strain CCMP1986 / NIES-2087 / MED4), this protein is tRNA uridine 5-carboxymethylaminomethyl modification enzyme MnmG.